A 349-amino-acid polypeptide reads, in one-letter code: Fructose-1,6-bisphosphatase class 1 (349 aa).

Positions 92, 113, 115, and 116 each coordinate Mg(2+). Residues 116-119 (DGSS), Asn-209, Tyr-242, and Lys-272 each bind substrate. A Mg(2+)-binding site is contributed by Glu-278.

The protein belongs to the FBPase class 1 family. As to quaternary structure, homotetramer. It depends on Mg(2+) as a cofactor.

It localises to the cytoplasm. The catalysed reaction is beta-D-fructose 1,6-bisphosphate + H2O = beta-D-fructose 6-phosphate + phosphate. The protein operates within carbohydrate biosynthesis; Calvin cycle. This Chloroherpeton thalassium (strain ATCC 35110 / GB-78) protein is Fructose-1,6-bisphosphatase class 1.